The following is a 134-amino-acid chain: MAVNARLISKSYLSMFALPGYDAFLGFLLVSAAVPILALVTNKLLAPRSRTGERELTYESGMEPIGGAWIQFNIRYYMFALVFVIFDVETVFLYPWAVAFHRLGLLAFIEALIFIAILLVALAYAWRKGALEWS.

Transmembrane regions (helical) follow at residues 20-40 (GYDAFLGFLLVSAAVPILALV), 78-98 (MFALVFVIFDVETVFLYPWAV), and 103-123 (LGLLAFIEALIFIAILLVALA).

Belongs to the complex I subunit 3 family. As to quaternary structure, NDH-1 can be composed of about 15 different subunits; different subcomplexes with different compositions have been identified which probably have different functions.

The protein resides in the cellular thylakoid membrane. The catalysed reaction is a plastoquinone + NADH + (n+1) H(+)(in) = a plastoquinol + NAD(+) + n H(+)(out). It catalyses the reaction a plastoquinone + NADPH + (n+1) H(+)(in) = a plastoquinol + NADP(+) + n H(+)(out). Its function is as follows. NDH-1 shuttles electrons from an unknown electron donor, via FMN and iron-sulfur (Fe-S) centers, to quinones in the respiratory and/or the photosynthetic chain. The immediate electron acceptor for the enzyme in this species is believed to be plastoquinone. Couples the redox reaction to proton translocation, and thus conserves the redox energy in a proton gradient. Cyanobacterial NDH-1 also plays a role in inorganic carbon-concentration. In Prochlorococcus marinus (strain MIT 9303), this protein is NAD(P)H-quinone oxidoreductase subunit 3.